A 376-amino-acid polypeptide reads, in one-letter code: Chaperone protein DnaJ (376 aa).

In terms of domain architecture, J spans 5-70 (DYYEVLGVAR…QKRAAYDQFG (66 aa)). The CR-type zinc-finger motif lies at 134 to 212 (GTSVKIKVPT…CHGHGRVEET (79 aa)). Zn(2+)-binding residues include C147, C150, C164, C167, C186, C189, C200, and C203. 4 CXXCXGXG motif repeats span residues 147–154 (CTNCGGSG), 164–171 (CNTCGGHG), 186–193 (CPTCRGQG), and 200–207 (CNKCHGHG).

The protein belongs to the DnaJ family. Homodimer. Zn(2+) serves as cofactor.

It localises to the cytoplasm. In terms of biological role, participates actively in the response to hyperosmotic and heat shock by preventing the aggregation of stress-denatured proteins and by disaggregating proteins, also in an autonomous, DnaK-independent fashion. Unfolded proteins bind initially to DnaJ; upon interaction with the DnaJ-bound protein, DnaK hydrolyzes its bound ATP, resulting in the formation of a stable complex. GrpE releases ADP from DnaK; ATP binding to DnaK triggers the release of the substrate protein, thus completing the reaction cycle. Several rounds of ATP-dependent interactions between DnaJ, DnaK and GrpE are required for fully efficient folding. Also involved, together with DnaK and GrpE, in the DNA replication of plasmids through activation of initiation proteins. This chain is Chaperone protein DnaJ, found in Teredinibacter turnerae (strain ATCC 39867 / T7901).